A 309-amino-acid chain; its full sequence is HTH-type transcriptional activator AaeR (309 aa).

The HTH lysR-type domain occupies 1–59; that stretch reads MERLKRMSVFAKVVEFGSFTAAARQLQMSVSSISQTVSKLEDELQVKLLNRSTRSIGLT. The segment at residues 19-38 is a DNA-binding region (H-T-H motif); the sequence is FTAAARQLQMSVSSISQTVS.

It belongs to the LysR transcriptional regulatory family.

Its activity is regulated as follows. Activity is regulated by p-hydroxybenzoic acid. Functionally, transcriptional regulator that activates expression of the aaeXAB operon, which is involved in the efflux of aromatic carboxylic acids such as p-hydroxybenzoic acid (pHBA). In the presence of the effector pHBA, acts by binding to a single target within the aaeXAB-aaeR intergenic region. In the absence of pHBA, binds more than 50 sites along the E.coli K12 genome, including genes related to biofilm formation and several genes involved in stress response, suggesting that it might play a role in quorum sensing in the absence of pHBA. In Escherichia coli (strain K12), this protein is HTH-type transcriptional activator AaeR.